Consider the following 557-residue polypeptide: UvrABC system protein C (557 aa).

The 76-residue stretch at 14 to 89 (EEPGVYIFKN…IKKYRPKYNV (76 aa)) folds into the GIY-YIG domain. The UVR domain maps to 194-229 (EEVFDYLKEKMETHSRMLDFENAAKYRDLLLNLSNV).

This sequence belongs to the UvrC family. In terms of assembly, interacts with UvrB in an incision complex.

It localises to the cytoplasm. The UvrABC repair system catalyzes the recognition and processing of DNA lesions. UvrC both incises the 5' and 3' sides of the lesion. The N-terminal half is responsible for the 3' incision and the C-terminal half is responsible for the 5' incision. The chain is UvrABC system protein C from Thermotoga petrophila (strain ATCC BAA-488 / DSM 13995 / JCM 10881 / RKU-1).